The primary structure comprises 63 residues: Acrosin inhibitor 1 (63 aa).

A Kazal-like domain is found at 8–63 (FGFPPDCKVYTEACTREYNPICDSAAKTYSNECTFCNEKMNNDADIHFNHFGECEY). Cystine bridges form between C14–C43, C21–C40, and C29–C61.

In terms of tissue distribution, seminal plasma.

Its subcellular location is the secreted. Its function is as follows. Strong inhibitor of acrosin. The polypeptide is Acrosin inhibitor 1 (Bos taurus (Bovine)).